The chain runs to 236 residues: Ribonuclease 3 (236 aa).

One can recognise an RNase III domain in the interval lysine 7–glycine 136. A Mg(2+)-binding site is contributed by glutamate 49. Residue aspartate 53 is part of the active site. Mg(2+) contacts are provided by aspartate 122 and glutamate 125. Glutamate 125 is a catalytic residue. The 71-residue stretch at aspartate 162 to aspartate 232 folds into the DRBM domain.

The protein belongs to the ribonuclease III family. Homodimer. Mg(2+) serves as cofactor.

The protein localises to the cytoplasm. The catalysed reaction is Endonucleolytic cleavage to 5'-phosphomonoester.. Functionally, digests double-stranded RNA. Involved in the processing of primary rRNA transcript to yield the immediate precursors to the large and small rRNAs (23S and 16S). Processes some mRNAs, and tRNAs when they are encoded in the rRNA operon. Processes pre-crRNA and tracrRNA of type II CRISPR loci if present in the organism. The protein is Ribonuclease 3 of Leuconostoc mesenteroides subsp. mesenteroides (strain ATCC 8293 / DSM 20343 / BCRC 11652 / CCM 1803 / JCM 6124 / NCDO 523 / NBRC 100496 / NCIMB 8023 / NCTC 12954 / NRRL B-1118 / 37Y).